A 477-amino-acid polypeptide reads, in one-letter code: Glycogen synthase (477 aa).

Lys15 is an ADP-alpha-D-glucose binding site.

The protein belongs to the glycosyltransferase 1 family. Bacterial/plant glycogen synthase subfamily.

It catalyses the reaction [(1-&gt;4)-alpha-D-glucosyl](n) + ADP-alpha-D-glucose = [(1-&gt;4)-alpha-D-glucosyl](n+1) + ADP + H(+). Its pathway is glycan biosynthesis; glycogen biosynthesis. Its function is as follows. Synthesizes alpha-1,4-glucan chains using ADP-glucose. The polypeptide is Glycogen synthase (Caldicellulosiruptor saccharolyticus (strain ATCC 43494 / DSM 8903 / Tp8T 6331)).